We begin with the raw amino-acid sequence, 249 residues long: Aliphatic sulfonates import ATP-binding protein SsuB 2 (249 aa).

The 217-residue stretch at 15–231 (VHVRDLARRF…DHGDPRFAQF (217 aa)) folds into the ABC transporter domain. ATP is bound at residue 47-54 (GRSGSGKS).

The protein belongs to the ABC transporter superfamily. Aliphatic sulfonates importer (TC 3.A.1.17.2) family. The complex is composed of two ATP-binding proteins (SsuB), two transmembrane proteins (SsuC) and a solute-binding protein (SsuA).

The protein localises to the cell inner membrane. It catalyses the reaction ATP + H2O + aliphatic sulfonate-[sulfonate-binding protein]Side 1 = ADP + phosphate + aliphatic sulfonateSide 2 + [sulfonate-binding protein]Side 1.. Part of the ABC transporter complex SsuABC involved in aliphatic sulfonates import. Responsible for energy coupling to the transport system. The protein is Aliphatic sulfonates import ATP-binding protein SsuB 2 of Rhizobium johnstonii (strain DSM 114642 / LMG 32736 / 3841) (Rhizobium leguminosarum bv. viciae).